We begin with the raw amino-acid sequence, 866 residues long: Probable LRR receptor-like serine/threonine-protein kinase At5g16900 (866 aa).

A signal peptide spans 1–20 (MEDRHRYLFFIFAIIHYVQA). At 21 to 515 (QQGFISLDCG…SSSGNKETTV (495 aa)) the chain is on the extracellular side. Residues Asn137, Asn176, Asn230, Asn251, Asn331, Asn404, Asn409, and Asn436 are each glycosylated (N-linked (GlcNAc...) asparagine). LRR repeat units lie at residues 415–438 (RIIS…QNLT), 439–461 (QLQK…LANM), and 463–485 (SLLF…LLDR). Asn468 and Asn505 each carry an N-linked (GlcNAc...) asparagine glycan. Residues 516 to 536 (IAPVAAAIAIFIAVLVLIIVF) form a helical membrane-spanning segment. The Cytoplasmic segment spans residues 537–866 (IKKRPSSIRA…LNQVIDSKSS (330 aa)). Thr564 is modified (phosphothreonine). The 274-residue stretch at 573 to 846 (NNFERVIGEG…HVVQELKQCI (274 aa)) folds into the Protein kinase domain. Residues 579–587 (IGEGGFGVV) and Lys601 contribute to the ATP site. Tyr646 is subject to Phosphotyrosine. The Proton acceptor role is filled by Asp698. The residue at position 732 (Ser732) is a Phosphoserine. Residues Thr733 and Thr738 each carry the phosphothreonine modification. A Phosphotyrosine modification is found at Tyr746.

It belongs to the protein kinase superfamily. Ser/Thr protein kinase family.

It is found in the membrane. The enzyme catalyses L-seryl-[protein] + ATP = O-phospho-L-seryl-[protein] + ADP + H(+). It carries out the reaction L-threonyl-[protein] + ATP = O-phospho-L-threonyl-[protein] + ADP + H(+). The chain is Probable LRR receptor-like serine/threonine-protein kinase At5g16900 from Arabidopsis thaliana (Mouse-ear cress).